A 229-amino-acid chain; its full sequence is Potassium/proton antiporter CemA (229 aa).

A run of 4 helical transmembrane segments spans residues 7–27 (FTPL…SLSF), 114–134 (ITCF…LVIL), 154–174 (ILLL…ELMI), and 189–209 (IISG…KYWI).

Belongs to the CemA family.

The protein localises to the plastid. The protein resides in the chloroplast inner membrane. It catalyses the reaction K(+)(in) + H(+)(out) = K(+)(out) + H(+)(in). Its function is as follows. Contributes to K(+)/H(+) antiport activity by supporting proton efflux to control proton extrusion and homeostasis in chloroplasts in a light-dependent manner to modulate photosynthesis. Prevents excessive induction of non-photochemical quenching (NPQ) under continuous-light conditions. Indirectly promotes efficient inorganic carbon uptake into chloroplasts. The sequence is that of Potassium/proton antiporter CemA from Platanus occidentalis (Sycamore).